The following is a 210-amino-acid chain: LexA repressor (210 aa).

The segment at residues 30 to 50 is a DNA-binding region (H-T-H motif); that stretch reads RVEIAREIGFKSPNAAEEHLK. Active-site for autocatalytic cleavage activity residues include S127 and K164.

This sequence belongs to the peptidase S24 family. In terms of assembly, homodimer.

It carries out the reaction Hydrolysis of Ala-|-Gly bond in repressor LexA.. Represses a number of genes involved in the response to DNA damage (SOS response), including recA and lexA. In the presence of single-stranded DNA, RecA interacts with LexA causing an autocatalytic cleavage which disrupts the DNA-binding part of LexA, leading to derepression of the SOS regulon and eventually DNA repair. This is LexA repressor from Actinobacillus pleuropneumoniae serotype 7 (strain AP76).